Here is a 251-residue protein sequence, read N- to C-terminus: Triosephosphate isomerase (251 aa).

Residue 9–11 (NWK) participates in substrate binding. Catalysis depends on histidine 95, which acts as the Electrophile. Glutamate 167 functions as the Proton acceptor in the catalytic mechanism. Residues glycine 173, serine 213, and 234-235 (GG) each bind substrate. The residue at position 213 (serine 213) is a Phosphoserine.

The protein belongs to the triosephosphate isomerase family. In terms of assembly, homodimer.

The protein resides in the cytoplasm. It carries out the reaction D-glyceraldehyde 3-phosphate = dihydroxyacetone phosphate. Its pathway is carbohydrate biosynthesis; gluconeogenesis. It functions in the pathway carbohydrate degradation; glycolysis; D-glyceraldehyde 3-phosphate from glycerone phosphate: step 1/1. Functionally, involved in the gluconeogenesis. Catalyzes stereospecifically the conversion of dihydroxyacetone phosphate (DHAP) to D-glyceraldehyde-3-phosphate (G3P). This is Triosephosphate isomerase from Anoxybacillus flavithermus (strain DSM 21510 / WK1).